Here is a 553-residue protein sequence, read N- to C-terminus: Protein Early 65 kDa (553 aa).

Its subcellular location is the host cytoplasm. Functionally, may participate in the recruitment of G-actin to the host nucleus. In Autographa californica nuclear polyhedrosis virus (AcMNPV), this protein is Protein Early 65 kDa (HE65).